Reading from the N-terminus, the 426-residue chain is Cdc25-like protein phosphatase twine (426 aa).

Residues 1–27 (MASKRLMLDVEEEDDESGACGQENFDP) are disordered. The Rhodanese domain maps to 265–371 (SQGGYEIIDC…FFGLYSQLCQ (107 aa)). Cysteine 318 is a catalytic residue.

Belongs to the MPI phosphatase family. Expressed in developing male and female germ cells.

It carries out the reaction O-phospho-L-tyrosyl-[protein] + H2O = L-tyrosyl-[protein] + phosphate. Required during meiosis. Regulates the transition from the extended G2 phase to the onset of the first meiotic division. This Drosophila melanogaster (Fruit fly) protein is Cdc25-like protein phosphatase twine (twe).